The sequence spans 49 residues: Light-harvesting protein B800/850/890 alpha-3 chain (49 aa).

The Cytoplasmic portion of the chain corresponds to 1-14 (MNQARIWLVVKPSV). Residues 15-35 (GLPLLLGVVLLIALLVHGAIL) form a helical membrane-spanning segment. Histidine 31 provides a ligand contact to a bacteriochlorophyll. At 36–49 (TNTSWYPTYFEGNW) the chain is on the periplasmic side.

This sequence belongs to the antenna complex alpha subunit family. The core complex is formed by different alpha and beta chains, binding bacteriochlorophyll molecules, and arranged most probably in tetrameric structures disposed around the reaction center. The non-pigmented gamma chains may constitute additional components.

It is found in the cell inner membrane. Functionally, antenna complexes are light-harvesting systems, which transfer the excitation energy to the reaction centers. This chain is Light-harvesting protein B800/850/890 alpha-3 chain, found in Halorhodospira halophila (strain DSM 244 / SL1) (Ectothiorhodospira halophila (strain DSM 244 / SL1)).